The sequence spans 254 residues: NFU1 iron-sulfur cluster scaffold homolog, mitochondrial (254 aa).

The transit peptide at Met1–Trp9 directs the protein to the mitochondrion. The nifU stretch occupies residues Ile173–Val241. Residues Cys210 and Cys213 each coordinate [4Fe-4S] cluster.

It belongs to the NifU family. Monomer and homohexamer; the apo-NFU1 is a monomer, while the holo-NFU1 is a hexamer composed of a trimer of dimer that is probably linked by some 4Fe-4S cluster. Interacts with HIRA and EPM2A/laforin. Interacts with BOLA3. Interacts with HSPA9. In terms of tissue distribution, ubiquitous. Expression in adult lung is weak compared to fetal lung.

It is found in the mitochondrion. It localises to the cytoplasm. The protein resides in the cytosol. Iron-sulfur cluster scaffold protein which can assemble [4Fe-4S] clusters and deliver them to target proteins. In Homo sapiens (Human), this protein is NFU1 iron-sulfur cluster scaffold homolog, mitochondrial (NFU1).